The chain runs to 86 residues: UPF0291 protein LBA1279 (86 aa).

Composition is skewed to basic and acidic residues over residues 1–27 (MNKD…KENE) and 65–75 (NGKEVTSEKAK). Disordered regions lie at residues 1-36 (MNKD…EEEE) and 65-86 (NGKE…LRKD). Positions 76 to 86 (QAQRKKGLRKD) are enriched in basic residues.

Belongs to the UPF0291 family.

It is found in the cytoplasm. This Lactobacillus acidophilus (strain ATCC 700396 / NCK56 / N2 / NCFM) protein is UPF0291 protein LBA1279.